The sequence spans 332 residues: Endonuclease 8-like 2 (332 aa).

Proline 2 functions as the Schiff-base intermediate with DNA in the catalytic mechanism. The active-site Proton donor is the glutamate 3. Residue lysine 50 is the Proton donor; for beta-elimination activity of the active site. At lysine 50 the chain carries N6-acetyllysine. Residues 59–121 form a disordered region; the sequence is DEEMGPPGSS…EDDSEYLERD (63 aa). At serine 68 the chain carries Phosphoserine. The span at 74 to 84 shows a compositional bias: basic and acidic residues; the sequence is PQKEVQKEGAA. The segment covering 94–104 has biased composition (polar residues); the sequence is GQKTLDGSSRS. Position 154 is an N6-acetyllysine (lysine 154). Asparagine 231 is a binding site for DNA. The FPG-type zinc-finger motif lies at 284–320; that stretch reads QVYQKEQCPAGHQVMKEAFGPEDGLQRLTWWCPQCQP. The active-site Proton donor; for delta-elimination activity is arginine 310.

Belongs to the FPG family. As to quaternary structure, binds EP300. Detected in testis, skeletal muscle, heart, brain, placenta, lung, pancreas, kidney and liver.

It localises to the nucleus. The catalysed reaction is 2'-deoxyribonucleotide-(2'-deoxyribose 5'-phosphate)-2'-deoxyribonucleotide-DNA = a 3'-end 2'-deoxyribonucleotide-(2,3-dehydro-2,3-deoxyribose 5'-phosphate)-DNA + a 5'-end 5'-phospho-2'-deoxyribonucleoside-DNA + H(+). With respect to regulation, acetylation of Lys-50 leads to loss of DNA nicking activity. Acetylation of Lys-154 has no effect. Involved in base excision repair of DNA damaged by oxidation or by mutagenic agents. Has DNA glycosylase activity towards 5-hydroxyuracil and other oxidized derivatives of cytosine with a preference for mismatched double-stranded DNA (DNA bubbles). Has low or no DNA glycosylase activity towards thymine glycol, 2-hydroxyadenine, hypoxanthine and 8-oxoguanine. Has AP (apurinic/apyrimidinic) lyase activity and introduces nicks in the DNA strand. Cleaves the DNA backbone by beta-delta elimination to generate a single-strand break at the site of the removed base with both 3'- and 5'-phosphates. The chain is Endonuclease 8-like 2 (NEIL2) from Homo sapiens (Human).